The sequence spans 415 residues: Serine hydroxymethyltransferase (415 aa).

(6S)-5,6,7,8-tetrahydrofolate-binding positions include Leu-121 and 125–127; that span reads GHL. Lys-230 carries the post-translational modification N6-(pyridoxal phosphate)lysine. (6S)-5,6,7,8-tetrahydrofolate is bound by residues Glu-246 and 354-356; that span reads SPF.

Belongs to the SHMT family. In terms of assembly, homodimer. It depends on pyridoxal 5'-phosphate as a cofactor.

The protein localises to the cytoplasm. The enzyme catalyses (6R)-5,10-methylene-5,6,7,8-tetrahydrofolate + glycine + H2O = (6S)-5,6,7,8-tetrahydrofolate + L-serine. The protein operates within one-carbon metabolism; tetrahydrofolate interconversion. It participates in amino-acid biosynthesis; glycine biosynthesis; glycine from L-serine: step 1/1. Its function is as follows. Catalyzes the reversible interconversion of serine and glycine with tetrahydrofolate (THF) serving as the one-carbon carrier. This reaction serves as the major source of one-carbon groups required for the biosynthesis of purines, thymidylate, methionine, and other important biomolecules. Also exhibits THF-independent aldolase activity toward beta-hydroxyamino acids, producing glycine and aldehydes, via a retro-aldol mechanism. This chain is Serine hydroxymethyltransferase, found in Bdellovibrio bacteriovorus (strain ATCC 15356 / DSM 50701 / NCIMB 9529 / HD100).